Consider the following 461-residue polypeptide: GTPase Der (461 aa).

EngA-type G domains follow at residues 3–167 and 190–371; these read PQVI…GEKQ and LKLA…AAWS. Residues 9-16, 56-60, 119-122, 196-203, 249-253, and 314-317 contribute to the GTP site; these read GRPNVGKS, DTAGW, NKAE, GRPNAGKS, DTAGM, and NKWD. The 85-residue stretch at 372 to 456 folds into the KH-like domain; sequence KRVPTAALNR…PIRLTLRSPK (85 aa).

This sequence belongs to the TRAFAC class TrmE-Era-EngA-EngB-Septin-like GTPase superfamily. EngA (Der) GTPase family. In terms of assembly, associates with the 50S ribosomal subunit.

In terms of biological role, GTPase that plays an essential role in the late steps of ribosome biogenesis. This is GTPase Der from Novosphingobium aromaticivorans (strain ATCC 700278 / DSM 12444 / CCUG 56034 / CIP 105152 / NBRC 16084 / F199).